We begin with the raw amino-acid sequence, 530 residues long: Alpha-(1,3)-fucosyltransferase 4 (530 aa).

Disordered regions lie at residues Met1 to Pro48 and His66 to Asp113. Residues Met1–Arg147 lie on the Cytoplasmic side of the membrane. The span at Ala88–Cys106 shows a compositional bias: basic and acidic residues. A helical; Signal-anchor for type II membrane protein membrane pass occupies residues Gly148–Trp172. Residues Gly173 to Arg530 lie on the Lumenal side of the membrane. N-linked (GlcNAc...) asparagine glycosylation is found at Asn216 and Asn315.

It belongs to the glycosyltransferase 10 family.

It is found in the golgi apparatus. Its subcellular location is the golgi stack membrane. The catalysed reaction is a beta-D-galactosyl-(1-&gt;4)-N-acetyl-beta-D-glucosaminyl derivative + GDP-beta-L-fucose = a beta-D-galactosyl-(1-&gt;4)-[alpha-L-fucosyl-(1-&gt;3)]-N-acetyl-beta-D-glucosaminyl derivative + GDP + H(+). It catalyses the reaction an N-acetyl-alpha-neuraminyl-(2-&gt;3)-beta-D-galactosyl-(1-&gt;4)-N-acetyl-beta-D-glucosaminyl derivative + GDP-beta-L-fucose = an alpha-Neu5Ac-(2-&gt;3)-beta-D-Gal-(1-&gt;4)-[alpha-L-Fuc-(1-&gt;3)]-beta-D-GlcNAc derivative + GDP + H(+). The enzyme catalyses an alpha-Neu5Ac-(2-&gt;3)-beta-D-Gal-(1-&gt;4)-beta-D-GlcNAc-(1-&gt;3)-beta-D-Gal-(1-&gt;4)-beta-D-GlcNAc derivative + GDP-beta-L-fucose = an alpha-Neu5Ac-(2-&gt;3)-beta-D-Gal-(1-&gt;4)-beta-D-GlcNAc-(1-&gt;3)-beta-D-Gal-(1-&gt;4)-[alpha-L-Fuc-(1-&gt;3)]-beta-D-GlcNAc derivative + GDP + H(+). It carries out the reaction an alpha-Neu5Ac-(2-&gt;3)-beta-D-Gal-(1-&gt;4)-beta-D-GlcNAc6S derivative + GDP-beta-L-fucose = an alpha-Neu5Ac-(2-&gt;3)-beta-D-Gal-(1-&gt;4)-[alpha-L-Fuc-(1-&gt;3)]-beta-D-GlcNAc6S derivative + GDP + H(+). It participates in protein modification; protein glycosylation. Its function is as follows. Catalyzes alpha(1-&gt;3) linkage of fucosyl moiety transferred from GDP-beta-L-fucose to N-acetyl glucosamine (GlcNAc) within type 2 lactosamine (LacNAc, Gal-beta(1-&gt;4)GlcNAc) glycan attached to N- or O-linked glycoproteins. Robustly fucosylates nonsialylated distal LacNAc unit of the polylactosamine chain to form Lewis X antigen (CD15), a glycan determinant known to mediate important cellular functions in development and immunity. Fucosylates with lower efficiency sialylated LacNAc acceptors to form sialyl Lewis X and 6-sulfo sialyl Lewis X determinants that serve as recognition epitopes for C-type lectins. Together with FUT7 contributes to SELE, SELL and SELP selectin ligand biosynthesis and selectin-dependent lymphocyte homing, leukocyte migration and blood leukocyte homeostasis. In a cell type specific manner, may also fucosylate the internal LacNAc unit of the polylactosamine chain to form VIM-2 antigen that serves as recognition epitope for SELE. The chain is Alpha-(1,3)-fucosyltransferase 4 (FUT4) from Pan troglodytes (Chimpanzee).